The following is a 324-amino-acid chain: Ribose-phosphate pyrophosphokinase (324 aa).

ATP-binding positions include 45-47 and 104-105; these read NGE and RQ. 2 residues coordinate Mg(2+): His138 and Asp178. The active site involves Lys201. D-ribose 5-phosphate-binding positions include Arg203, Asp229, and 233–237; that span reads DTGGT.

Belongs to the ribose-phosphate pyrophosphokinase family. Class I subfamily. Homohexamer. Mg(2+) is required as a cofactor.

The protein localises to the cytoplasm. The catalysed reaction is D-ribose 5-phosphate + ATP = 5-phospho-alpha-D-ribose 1-diphosphate + AMP + H(+). The protein operates within metabolic intermediate biosynthesis; 5-phospho-alpha-D-ribose 1-diphosphate biosynthesis; 5-phospho-alpha-D-ribose 1-diphosphate from D-ribose 5-phosphate (route I): step 1/1. Functionally, involved in the biosynthesis of the central metabolite phospho-alpha-D-ribosyl-1-pyrophosphate (PRPP) via the transfer of pyrophosphoryl group from ATP to 1-hydroxyl of ribose-5-phosphate (Rib-5-P). The protein is Ribose-phosphate pyrophosphokinase of Streptomyces avermitilis (strain ATCC 31267 / DSM 46492 / JCM 5070 / NBRC 14893 / NCIMB 12804 / NRRL 8165 / MA-4680).